A 1529-amino-acid chain; its full sequence is ABC multidrug transporter AFR2 (1529 aa).

An ABC transporter 1 domain is found at 144-394; that stretch reads GSLRDLIGNR…FVDMGFHCPS (251 aa). N235 and N318 each carry an N-linked (GlcNAc...) asparagine glycan. The next 5 membrane-spanning stretches (helical) occupy residues 510–530, 539–559, 589–609, 614–634, and 648–668; these read LFGN…LPVT, ALLF…ILIL, IPYK…MTNL, GAYF…SMLF, and LAPA…AVNV. N-linked (GlcNAc...) asparagine glycosylation is present at N742. The chain crosses the membrane as a helical span at residues 757–777; it reads GILIGFFLFFTAIYLTATEFI. The ABC transporter 2 domain maps to 845–1087; that stretch reads FSWKDVVYDI…ILIDYFEKNG (243 aa). Residue 881–888 coordinates ATP; that stretch reads GVSGAGKT. The next 5 helical transmembrane spans lie at 1193–1213, 1229–1249, 1268–1288, 1314–1334, and 1353–1373; these read YIWA…FSFF, VFMM…NFVT, IFIL…GVII, LMFL…IMIV, and MCLI…FWVF. N1434 is a glycosylation site (N-linked (GlcNAc...) asparagine). A helical membrane pass occupies residues 1465-1485; it reads FGLLWVYVVFNVIAAIGIYWL. Residues 1493-1505 show a composition bias toward basic and acidic residues; the sequence is GKERASEPEDVQE. Residues 1493-1529 are disordered; the sequence is GKERASEPEDVQEKQVPAQSTEKKYQSISRSSESTVA. Polar residues predominate over residues 1518 to 1529; sequence QSISRSSESTVA.

Belongs to the ABC transporter superfamily. ABCG family. PDR (TC 3.A.1.205) subfamily.

It localises to the cell membrane. It carries out the reaction itraconazole(in) + ATP + H2O = itraconazole(out) + ADP + phosphate + H(+). It catalyses the reaction voriconazole(in) + ATP + H2O = voriconazole(out) + ADP + phosphate + H(+). The enzyme catalyses fluconazole(in) + ATP + H2O = fluconazole(out) + ADP + phosphate + H(+). Pleiotropic ABC efflux transporter that confers resistance to structurally and functionally unrelated compounds including azoles such as fluconazole (FLC), itraconazole (ITC), posaconazole (POS), and voriconazole (VRC). In Cryptococcus deuterogattii (strain R265) (Cryptococcus gattii VGII (strain R265)), this protein is ABC multidrug transporter AFR2.